The following is a 345-amino-acid chain: tRNA pseudouridine synthase B (345 aa).

Aspartate 39 acts as the Nucleophile in catalysis.

This sequence belongs to the pseudouridine synthase TruB family. Type 1 subfamily.

The enzyme catalyses uridine(55) in tRNA = pseudouridine(55) in tRNA. Its function is as follows. Responsible for synthesis of pseudouridine from uracil-55 in the psi GC loop of transfer RNAs. The polypeptide is tRNA pseudouridine synthase B (Rickettsia rickettsii (strain Iowa)).